A 394-amino-acid polypeptide reads, in one-letter code: Phosphoglycerate kinase (394 aa).

Substrate is bound by residues 21 to 23, Arg36, 59 to 62, Arg118, and Arg151; these read DFN and HLGR. ATP is bound by residues Lys202, Gly293, Glu324, and 350–353; that span reads GGDS.

This sequence belongs to the phosphoglycerate kinase family. In terms of assembly, monomer.

It is found in the cytoplasm. It carries out the reaction (2R)-3-phosphoglycerate + ATP = (2R)-3-phospho-glyceroyl phosphate + ADP. It participates in carbohydrate degradation; glycolysis; pyruvate from D-glyceraldehyde 3-phosphate: step 2/5. This is Phosphoglycerate kinase from Exiguobacterium sp. (strain ATCC BAA-1283 / AT1b).